Reading from the N-terminus, the 372-residue chain is Serine proteinase inhibitor 1 (372 aa).

The protein belongs to the serpin family. Poxviruses subfamily.

The protein localises to the host cytoplasm. Functionally, plays a role in mediating viral host range. May act to inhibit a caspase independent form of apoptosis to allow efficient virus replication in infected cells. This chain is Serine proteinase inhibitor 1 (OPG208), found in Homo sapiens (Human).